The chain runs to 130 residues: Small ribosomal subunit protein uS9 (130 aa).

It belongs to the universal ribosomal protein uS9 family.

This Pasteurella multocida (strain Pm70) protein is Small ribosomal subunit protein uS9.